The chain runs to 318 residues: Transaldolase (318 aa).

K132 (schiff-base intermediate with substrate) is an active-site residue.

The protein belongs to the transaldolase family. Type 1 subfamily. In terms of assembly, homodimer.

It is found in the cytoplasm. It catalyses the reaction D-sedoheptulose 7-phosphate + D-glyceraldehyde 3-phosphate = D-erythrose 4-phosphate + beta-D-fructose 6-phosphate. Its pathway is carbohydrate degradation; pentose phosphate pathway; D-glyceraldehyde 3-phosphate and beta-D-fructose 6-phosphate from D-ribose 5-phosphate and D-xylulose 5-phosphate (non-oxidative stage): step 2/3. Functionally, transaldolase is important for the balance of metabolites in the pentose-phosphate pathway. This is Transaldolase from Allorhizobium ampelinum (strain ATCC BAA-846 / DSM 112012 / S4) (Agrobacterium vitis (strain S4)).